The sequence spans 319 residues: 33 kDa chaperonin (319 aa).

2 disulfide bridges follow: Cys239/Cys241 and Cys272/Cys275. The disordered stretch occupies residues 300 to 319; it reads EVSEEMKKAEEKEKEEKNKK.

It belongs to the HSP33 family. In terms of processing, under oxidizing conditions two disulfide bonds are formed involving the reactive cysteines. Under reducing conditions zinc is bound to the reactive cysteines and the protein is inactive.

It is found in the cytoplasm. Functionally, redox regulated molecular chaperone. Protects both thermally unfolding and oxidatively damaged proteins from irreversible aggregation. Plays an important role in the bacterial defense system toward oxidative stress. This Clostridium perfringens (strain ATCC 13124 / DSM 756 / JCM 1290 / NCIMB 6125 / NCTC 8237 / Type A) protein is 33 kDa chaperonin.